Reading from the N-terminus, the 999-residue chain is Golgin subfamily A member 2 (999 aa).

Residues 1–11 (MWPPRFPPPRP) show a composition bias toward pro residues. 2 disordered regions span residues 1 to 80 (MWPP…PAPP) and 244 to 288 (ARQK…YNKD). Positions 1–86 (MWPPRFPPPR…PAPPTAATDT (86 aa)) are interaction with p115/USO1. 2 positions are modified to dimethylated arginine: arginine 18 and arginine 30. Residues 26–49 (KKKLREYQQKNSPGVPAGAKKKKK) carry the Nuclear localization signal motif. A phosphoserine mark is found at serine 37, serine 66, serine 273, and serine 438. Residues 147 to 895 (LTSSNMKELE…VLRLVNERNE (749 aa)) are a coiled coil. A compositionally biased stretch (polar residues) spans 271–280 (TLSTVSTQQK). Residues 444–468 (SQMEEPPPPEPPAGPSEAEEQLQGE) are disordered. Positions 448–457 (EPPPPEPPAG) are enriched in pro residues. 3 positions are modified to phosphoserine: serine 697, serine 934, and serine 978. Positions 989 to 999 (DENDEVKIMVV) are interaction with GORASP1/GRASP65.

Belongs to the GOLGA2 family. Homodimer, may assemble into homohexamers. Homotetramer; forms a parallel homotetramer with a flexible rod-like structure that can give rise to I- and Y-shaped conformations. Interacts with GORASP1/GRASP65. The homooligomer forms a complex with GORASP1 with a 1:1 stoichiometry. Interacts with RAB1B that has been activated by GTP-binding. Interacts with p115/USO1; interaction with p115/USO1 inhibits interaction with STX5 and/or RAB1B. Interacts with STX5. Interacts with ZFPL1. Interacts with AKAP450/AKAP9; leading to recruit AKAP450/AKAP9 to the cis-Golgi. In terms of processing, phosphorylated at Ser-37 by CDK1 at the onset of mitosis, inhibiting the interaction with p115/USO1 and triggering Golgi disassembly. A report however suggests that Golgi disassembly is independent of phosphorylation at Ser-37. Phosphorylated at Ser-37 in prophase as the Golgi complex starts to break down, and remains phosphorylated during further breakdown and partitioning of the Golgi fragments in metaphase and anaphase. In telophase, GM130 is dephosphorylated by PP2A as the Golgi fragments start to reassemble. Post-translationally, cleaved by caspases at the onset of apoptosis. Methylation by PRMT5 is required for Golgi ribbon formation. As to expression, widely expressed. Detected in brain, kidney, lung, liver, spleen, heart, skeletal muscle, thymus and pancreas. Detected in spermatocytes. Present in oocytes during all oocyte meiotic maturation (at protein level).

The protein resides in the golgi apparatus. It is found in the cis-Golgi network membrane. Its subcellular location is the endoplasmic reticulum-Golgi intermediate compartment membrane. The protein localises to the cytoplasm. It localises to the cytoskeleton. The protein resides in the spindle pole. Functionally, peripheral membrane component of the cis-Golgi stack that acts as a membrane skeleton that maintains the structure of the Golgi apparatus, and as a vesicle thether that facilitates vesicle fusion to the Golgi membrane. Required for normal protein transport from the endoplasmic reticulum to the Golgi apparatus and the cell membrane. Together with p115/USO1 and STX5, involved in vesicle tethering and fusion at the cis-Golgi membrane to maintain the stacked and inter-connected structure of the Golgi apparatus. Plays a central role in mitotic Golgi disassembly: phosphorylation at Ser-37 by CDK1 at the onset of mitosis inhibits the interaction with p115/USO1, preventing tethering of COPI vesicles and thereby inhibiting transport through the Golgi apparatus during mitosis. Also plays a key role in spindle pole assembly and centrosome organization. Promotes the mitotic spindle pole assembly by activating the spindle assembly factor TPX2 to nucleate microtubules around the Golgi and capture them to couple mitotic membranes to the spindle: upon phosphorylation at the onset of mitosis, GOLGA2 interacts with importin-alpha via the nuclear localization signal region, leading to recruit importin-alpha to the Golgi membranes and liberate the spindle assembly factor TPX2 from importin-alpha. TPX2 then activates AURKA kinase and stimulates local microtubule nucleation. Upon filament assembly, nascent microtubules are further captured by GOLGA2, thus linking Golgi membranes to the spindle. Regulates the meiotic spindle pole assembly, probably via the same mechanism. Also regulates the centrosome organization. Also required for the Golgi ribbon formation and glycosylation of membrane and secretory proteins. In Mus musculus (Mouse), this protein is Golgin subfamily A member 2 (Golga2).